A 372-amino-acid polypeptide reads, in one-letter code: Glutamate 5-kinase (372 aa).

Lys14 lines the ATP pocket. The substrate site is built by Ser54, Asp141, and Asn153. Position 173-174 (173-174 (TD)) interacts with ATP. In terms of domain architecture, PUA spans 280-358 (RGTLVLDAGA…DAIEKLLGYV (79 aa)).

This sequence belongs to the glutamate 5-kinase family.

The protein localises to the cytoplasm. It carries out the reaction L-glutamate + ATP = L-glutamyl 5-phosphate + ADP. The protein operates within amino-acid biosynthesis; L-proline biosynthesis; L-glutamate 5-semialdehyde from L-glutamate: step 1/2. Functionally, catalyzes the transfer of a phosphate group to glutamate to form L-glutamate 5-phosphate. This is Glutamate 5-kinase from Ectopseudomonas mendocina (strain ymp) (Pseudomonas mendocina).